Reading from the N-terminus, the 196-residue chain is MNAQCLKKPEEGESSPGTGDKILQRNSLRAISPESSAKLYCCCGVIMVLTVAVVALSVALPATKTEQILINKTYAACPKNWIGVGNKCFYFSEYTSNWTFAQTFCMAQEAQLARFDNEKELNFLKRHMNSSHWIGLHRDSSEHPWRWTDNTEYNNTFLIQGDGECGFLSDNGISSSRDYIPRKWICSRSSNYMLQC.

Residues 1-21 (MNAQCLKKPEEGESSPGTGDK) are disordered. Over 1–41 (MNAQCLKKPEEGESSPGTGDKILQRNSLRAISPESSAKLYC) the chain is Cytoplasmic. A helical; Signal-anchor for type II membrane protein transmembrane segment spans residues 42-62 (CCGVIMVLTVAVVALSVALPA). Residues 63 to 196 (TKTEQILINK…SRSSNYMLQC (134 aa)) lie on the Extracellular side of the membrane. A disulfide bridge links C77 with C88. Residues 84 to 187 (VGNKCFYFSE…DYIPRKWICS (104 aa)) enclose the C-type lectin domain. A glycan (N-linked (GlcNAc...) asparagine) is linked at N97. Residues C105 and C186 are joined by a disulfide bond.

It localises to the cell membrane. Functionally, lectin-type cell surface receptor. The chain is C-type lectin domain family 2 member F (Clec2f) from Mus musculus (Mouse).